The sequence spans 689 residues: Glycine--tRNA ligase beta subunit (689 aa).

Belongs to the class-II aminoacyl-tRNA synthetase family. Tetramer of two alpha and two beta subunits.

The protein resides in the cytoplasm. The catalysed reaction is tRNA(Gly) + glycine + ATP = glycyl-tRNA(Gly) + AMP + diphosphate. This Salmonella paratyphi A (strain ATCC 9150 / SARB42) protein is Glycine--tRNA ligase beta subunit.